A 90-amino-acid polypeptide reads, in one-letter code: Small ribosomal subunit protein bS16 (90 aa).

It belongs to the bacterial ribosomal protein bS16 family.

The sequence is that of Small ribosomal subunit protein bS16 from Streptococcus sanguinis (strain SK36).